Consider the following 187-residue polypeptide: Segregation and condensation protein B (187 aa).

This sequence belongs to the ScpB family. In terms of assembly, homodimer. Homodimerization may be required to stabilize the binding of ScpA to the Smc head domains. Component of a cohesin-like complex composed of ScpA, ScpB and the Smc homodimer, in which ScpA and ScpB bind to the head domain of Smc. The presence of the three proteins is required for the association of the complex with DNA.

The protein localises to the cytoplasm. Participates in chromosomal partition during cell division. May act via the formation of a condensin-like complex containing Smc and ScpA that pull DNA away from mid-cell into both cell halves. This is Segregation and condensation protein B from Agathobacter rectalis (strain ATCC 33656 / DSM 3377 / JCM 17463 / KCTC 5835 / VPI 0990) (Eubacterium rectale).